The sequence spans 532 residues: Bifunctional purine biosynthesis protein PurH (532 aa).

The MGS-like domain occupies 1–149 (MTDPAPLTRA…KNHGAVTVLT (149 aa)).

It belongs to the PurH family.

The catalysed reaction is (6R)-10-formyltetrahydrofolate + 5-amino-1-(5-phospho-beta-D-ribosyl)imidazole-4-carboxamide = 5-formamido-1-(5-phospho-D-ribosyl)imidazole-4-carboxamide + (6S)-5,6,7,8-tetrahydrofolate. The enzyme catalyses IMP + H2O = 5-formamido-1-(5-phospho-D-ribosyl)imidazole-4-carboxamide. The protein operates within purine metabolism; IMP biosynthesis via de novo pathway; 5-formamido-1-(5-phospho-D-ribosyl)imidazole-4-carboxamide from 5-amino-1-(5-phospho-D-ribosyl)imidazole-4-carboxamide (10-formyl THF route): step 1/1. Its pathway is purine metabolism; IMP biosynthesis via de novo pathway; IMP from 5-formamido-1-(5-phospho-D-ribosyl)imidazole-4-carboxamide: step 1/1. The chain is Bifunctional purine biosynthesis protein PurH from Jannaschia sp. (strain CCS1).